Consider the following 251-residue polypeptide: UPF0246 protein DSY0297 (251 aa).

It belongs to the UPF0246 family.

In Desulfitobacterium hafniense (strain Y51), this protein is UPF0246 protein DSY0297.